We begin with the raw amino-acid sequence, 1476 residues long: ABC-type transporter FG02316 (1476 aa).

An N-linked (GlcNAc...) asparagine glycan is attached at Asn-2. A run of 10 helical transmembrane segments spans residues 23-43 (FTLL…LLLA), 64-84 (WLYC…AFLV), 97-117 (SLPA…LSYV), 156-176 (AAIT…AETI), 266-286 (ILFI…QPFL), 305-325 (QGYG…VTTG), 384-404 (VWAN…QLGL), 407-427 (LIPV…VSFV), 485-505 (LLIW…VLSF), and 532-552 (LFAL…SFMG). The ABC transmembrane type-1 1 domain occupies 274 to 552 (LCFIGFTFCQ…FVTSLSSFMG (279 aa)). Residues 586-615 (ISGVSSSEEKHPVSPIQESMMKTEPSGDSP) form a disordered region. The 226-residue stretch at 622–847 (IRNASFGYDR…SDNYVSHSDV (226 aa)) folds into the ABC transporter 1 domain. The N-linked (GlcNAc...) asparagine glycan is linked to Asn-624. Residue 654–661 (GPVGSGKS) coordinates ATP. N-linked (GlcNAc...) asparagine glycans are attached at residues Asn-682, Asn-696, Asn-798, and Asn-836. The disordered stretch occupies residues 842-870 (VSHSDVSSPDGARSKAPSSGPASSSAPVP). Residues 855-870 (SKAPSSGPASSSAPVP) are compositionally biased toward low complexity. Transmembrane regions (helical) follow at residues 906-926 (MNAI…AYIF), 950-970 (LGYY…FLVL), 1021-1041 (LIDM…VLCI), 1045-1065 (ILIA…LATL), 1137-1157 (WLTL…VVLV), and 1167-1187 (GLIG…KLLM). In terms of domain architecture, ABC transmembrane type-1 2 spans 916 to 1195 (VFVLAICAYI…LMTFWTTLET (280 aa)). The ABC transporter 2 domain occupies 1232–1464 (ILFDQVSAGY…GPDASTFASM (233 aa)). The N-linked (GlcNAc...) asparagine glycan is linked to Asn-1250. Residue 1265-1272 (GRTGSGKS) participates in ATP binding. A glycan (N-linked (GlcNAc...) asparagine) is linked at Asn-1414.

It belongs to the ABC transporter superfamily. ABCC family. Conjugate transporter (TC 3.A.1.208) subfamily.

The protein resides in the cell membrane. In terms of biological role, ABC-type transporter; part of the gene cluster that mediates the biosynthesis of the fusahexin, a cyclic hydrophobic hexapeptide with the amino acid sequence cyclo-(D-Ala-L-Leu-D-allo-Thr-L-Pro-D-Leu-L-Leu) that plays an important role in cell surface hydrophobicity. In Gibberella zeae (strain ATCC MYA-4620 / CBS 123657 / FGSC 9075 / NRRL 31084 / PH-1) (Wheat head blight fungus), this protein is ABC-type transporter FG02316.